The following is a 238-amino-acid chain: Nucleoside diphosphate kinase III, chloroplastic/mitochondrial (238 aa).

The N-terminal 85 residues, 1–85 (MSSQICRSAS…YMIQDQEVLA (85 aa)), are a transit peptide targeting the chloroplast and mitochondrion. ATP-binding residues include Lys96, Phe144, Arg172, Thr178, Arg189, and Asn199. Residue His202 is the Pros-phosphohistidine intermediate of the active site.

The protein belongs to the NDK family. As to quaternary structure, homohexamer. Requires Mg(2+) as cofactor.

Its subcellular location is the plastid. The protein resides in the chloroplast thylakoid lumen. It localises to the mitochondrion intermembrane space. The catalysed reaction is a 2'-deoxyribonucleoside 5'-diphosphate + ATP = a 2'-deoxyribonucleoside 5'-triphosphate + ADP. The enzyme catalyses a ribonucleoside 5'-diphosphate + ATP = a ribonucleoside 5'-triphosphate + ADP. Functionally, major role in the synthesis of nucleoside triphosphates other than ATP. The ATP gamma phosphate is transferred to the NDP beta phosphate via a ping-pong mechanism, using a phosphorylated active-site intermediate. Shows the highest specificity towards GDP. The sequence is that of Nucleoside diphosphate kinase III, chloroplastic/mitochondrial (NDPK3) from Arabidopsis thaliana (Mouse-ear cress).